A 113-amino-acid polypeptide reads, in one-letter code: MNTVRVTFLLVFVLAVSLGQADKDENRMVMQEKTEQGKSYLDFAENLLLQKLEELEAKLLEEDSEESRNSRQKRCIGEGVPCDENDPRCCSGLVCLKPTLHGIWYKSYYCYKK.

The N-terminal stretch at 1–21 (MNTVRVTFLLVFVLAVSLGQA) is a signal peptide. A propeptide spanning residues 22 to 74 (DKDENRMVMQEKTEQGKSYLDFAENLLLQKLEELEAKLLEEDSEESRNSRQKR) is cleaved from the precursor. 3 disulfide bridges follow: Cys75/Cys90, Cys82/Cys95, and Cys89/Cys110.

This sequence belongs to the neurotoxin 14 (magi-1) family. 01 (HNTX-16) subfamily. As to expression, expressed by the venom gland.

It is found in the secreted. Probable ion channel inhibitor. The polypeptide is U11-theraphotoxin-Hhn1a (Cyriopagopus hainanus (Chinese bird spider)).